The sequence spans 256 residues: Type III pantothenate kinase (256 aa).

6–13 (DVGNTNTV) contributes to the ATP binding site. Substrate-binding positions include tyrosine 100 and 107-110 (GADR). Catalysis depends on aspartate 109, which acts as the Proton acceptor. A K(+)-binding site is contributed by aspartate 129. Residue threonine 132 coordinates ATP. Threonine 184 is a binding site for substrate.

The protein belongs to the type III pantothenate kinase family. In terms of assembly, homodimer. NH4(+) is required as a cofactor. Requires K(+) as cofactor.

It is found in the cytoplasm. It catalyses the reaction (R)-pantothenate + ATP = (R)-4'-phosphopantothenate + ADP + H(+). The protein operates within cofactor biosynthesis; coenzyme A biosynthesis; CoA from (R)-pantothenate: step 1/5. Functionally, catalyzes the phosphorylation of pantothenate (Pan), the first step in CoA biosynthesis. In Myxococcus xanthus (strain DK1622), this protein is Type III pantothenate kinase.